Consider the following 301-residue polypeptide: Probable alpha-L-glutamate ligase (301 aa).

An ATP-grasp domain is found at 104–287 (LQLLARKGIG…VAGQLIDYIE (184 aa)). ATP contacts are provided by residues Lys-141, 178–179 (EF), Asp-187, and 211–213 (RSN). 3 residues coordinate Mg(2+): Asp-248, Glu-260, and Asn-262. Mn(2+) contacts are provided by Asp-248, Glu-260, and Asn-262.

Belongs to the RimK family. The cofactor is Mg(2+). It depends on Mn(2+) as a cofactor.

This Maridesulfovibrio salexigens (strain ATCC 14822 / DSM 2638 / NCIMB 8403 / VKM B-1763) (Desulfovibrio salexigens) protein is Probable alpha-L-glutamate ligase.